The chain runs to 413 residues: BEN domain-containing protein 7 (413 aa).

Residues Lys16, Lys56, and Lys85 each participate in a glycyl lysine isopeptide (Lys-Gly) (interchain with G-Cter in SUMO2) cross-link. Positions 78 to 88 are enriched in basic and acidic residues; sequence GKEGEKLKEEP. Disordered regions lie at residues 78-153 and 208-243; these read GKEG…GELP and RTAV…MEKK. Composition is skewed to polar residues over residues 99–111 and 121–153; these read LNSS…SLHP and PPQS…GELP. Over residues 211-222 the composition is skewed to basic residues; sequence VSRKRNKKKKVP. Low complexity predominate over residues 223-232; the sequence is PKTVEPLTVK. Residue Lys243 forms a Glycyl lysine isopeptide (Lys-Gly) (interchain with G-Cter in SUMO2) linkage. A BEN domain is found at 287-392; that stretch reads GFDVFMPKSQ…IKLARRRLKR (106 aa). Phosphothreonine is present on Thr324. Ser328 is modified (phosphoserine).

The sequence is that of BEN domain-containing protein 7 (BEND7) from Homo sapiens (Human).